The primary structure comprises 156 residues: Rhombotin-1 (156 aa).

2 consecutive LIM zinc-binding domains span residues 22-84 and 86-148; these read KGCA…LFGT and GNCA…GQLN.

Expressed in the brain and not in the thymus.

It localises to the nucleus. In terms of biological role, may be involved in gene regulation within neural lineage cells potentially by direct DNA binding or by binding to other transcription factors. This is Rhombotin-1 (LMO1) from Bos taurus (Bovine).